A 525-amino-acid chain; its full sequence is BTB/POZ domain-containing protein 2 (525 aa).

Residues 1 to 86 (MAAGGSGGRA…AEEAAGPGAA (86 aa)) are disordered. The segment covering 16–26 (VGVGPGTGGSP) has biased composition (gly residues). The span at 27-55 (GPSANAAATPAPGNAAAAAAAAAAAAAAP) shows a compositional bias: low complexity. Residues 56–65 (GPTPPAPPGP) show a composition bias toward pro residues. Positions 66–86 (GTDAQAAGAERAEEAAGPGAA) are enriched in low complexity. In terms of domain architecture, BTB spans 117–187 (CDVHFLVGKG…LYSDEVQIGP (71 aa)).

As to quaternary structure, interacts with topoisomerase 1 and with TRIM5 isoform Delta.

It is found in the cytoplasm. This chain is BTB/POZ domain-containing protein 2 (BTBD2), found in Homo sapiens (Human).